A 223-amino-acid polypeptide reads, in one-letter code: MOB kinase activator-like 4 (223 aa).

The interval 1–21 (MKMADGSTILRRNRPGTKSKD) is disordered. 4 residues coordinate Zn(2+): Cys-92, Cys-97, His-169, and His-174.

This sequence belongs to the MOB1/phocein family.

This chain is MOB kinase activator-like 4 (Mob4), found in Drosophila melanogaster (Fruit fly).